A 198-amino-acid chain; its full sequence is Inner membrane-spanning protein YciB (198 aa).

Helical transmembrane passes span 36–56 (IYSA…ALFL), 64–84 (GQLL…AFHS), 90–110 (WKAP…HFIG), 135–155 (VAWI…AFTF), and 162–182 (FKVF…GVYL).

Belongs to the YciB family.

The protein localises to the cell inner membrane. Functionally, plays a role in cell envelope biogenesis, maintenance of cell envelope integrity and membrane homeostasis. In Pseudomonas entomophila (strain L48), this protein is Inner membrane-spanning protein YciB.